A 270-amino-acid polypeptide reads, in one-letter code: LIM zinc-binding domain-containing Nebulette (270 aa).

One can recognise an LIM zinc-binding domain in the interval 3–63 (PQCARCGKVV…NAHYPKQSFT (61 aa)). Residues 61-95 (SFTTVADTPENLRLKQQSELQSQVKYKRDFEESKG) form a Nebulin 1 repeat. Residue Arg-96 is modified to Omega-N-methylarginine. The Nebulin 2 repeat unit spans residues 97 to 131 (GFSIVTDTPELQRLKRTQEQISNVKYHEDFEKTKG). At Arg-132 the chain carries Omega-N-methylarginine. A Nebulin 3 repeat occupies 133–159 (GFTPVVDDPVTERVRKSTQVVSDAAYK). Residue Thr-135 is modified to Phosphothreonine. The SH3 domain occupies 210 to 270 (AHLRTYRAMY…LPANYIEFVN (61 aa)). At Ser-230 the chain carries Phosphoserine.

It is found in the cytoplasm. In terms of biological role, binds to actin and plays an important role in the assembly of the Z-disk. Isoform 2 might play a role in the assembly of focal adhesion. The polypeptide is LIM zinc-binding domain-containing Nebulette (Nebl) (Mus musculus (Mouse)).